The following is a 256-amino-acid chain: Adenylate kinase (256 aa).

45 to 50 lines the ATP pocket; it reads GAGKGT. The NMP stretch occupies residues 67–96; that stretch reads ATGDLLRQQVAMGTDLGKQAKKIMDQGALV. Residues Thr-68, Arg-73, 94–96, 123–126, and Gln-130 each bind AMP; these read ALV and GFPR. An LID region spans residues 164 to 201; the sequence is GRLIHPGSGRSYHKIFSPPKQPMKDDITGEPLVQRSDD. ATP is bound by residues Arg-165 and 174-175; that span reads SY. AMP-binding residues include Arg-198 and Arg-209. ATP is bound at residue Gln-237.

This sequence belongs to the adenylate kinase family. AK2 subfamily. As to quaternary structure, monomer.

The protein localises to the cytoplasm. It is found in the cytosol. Its subcellular location is the mitochondrion intermembrane space. The catalysed reaction is AMP + ATP = 2 ADP. Catalyzes the reversible transfer of the terminal phosphate group between ATP and AMP. Plays an important role in cellular energy homeostasis and in adenine nucleotide metabolism. Adenylate kinase activity is critical for regulation of the phosphate utilization and the AMP de novo biosynthesis pathways. The polypeptide is Adenylate kinase (Malassezia globosa (strain ATCC MYA-4612 / CBS 7966) (Dandruff-associated fungus)).